The sequence spans 441 residues: Glutamate--tRNA ligase 2 (441 aa).

Positions 9-19 (PSPTGYIHVGN) match the 'HIGH' region motif. Positions 239-243 (ALSKR) match the 'KMSKS' region motif. Residue lysine 242 participates in ATP binding.

The protein belongs to the class-I aminoacyl-tRNA synthetase family. Glutamate--tRNA ligase type 1 subfamily. Monomer.

It is found in the cytoplasm. The enzyme catalyses tRNA(Glu) + L-glutamate + ATP = L-glutamyl-tRNA(Glu) + AMP + diphosphate. In terms of biological role, catalyzes the attachment of glutamate to tRNA(Glu) in a two-step reaction: glutamate is first activated by ATP to form Glu-AMP and then transferred to the acceptor end of tRNA(Glu). The protein is Glutamate--tRNA ligase 2 of Cereibacter sphaeroides (strain ATCC 17029 / ATH 2.4.9) (Rhodobacter sphaeroides).